Reading from the N-terminus, the 86-residue chain is MNTKEPHKRVVQGKVISKFAEKSAVILVERKVVHKKYRKIVKKFKKYTIHDQDNQVKVGDFVSAIECKPLSKTKSFTLKEILVVGV.

It belongs to the universal ribosomal protein uS17 family. As to quaternary structure, part of the 30S ribosomal subunit.

Its function is as follows. One of the primary rRNA binding proteins, it binds specifically to the 5'-end of 16S ribosomal RNA. The chain is Small ribosomal subunit protein uS17 from Helicobacter acinonychis (strain Sheeba).